The sequence spans 297 residues: METTMFKGSITALITPMNDDGSLDFSGFGRFVDWQVTEGSSGVVPVGTTGESPTLTHEEHARIVEYTVQVVAGRIPVIAGAGSNSTAEAVGMARHAKSVGADGVLVVAPYYNKPTQEGLYRHFMTVADATDLPLIIYNIPGRSVVDISVETMARMAQHARIVGVKDATANLLRPLQVRRAIRHKPFTQLSGEDGTVVSFLAAGGEGCISVTSNIAPRLCAELHRAWQDGRVADAMAIQDRLSAVHDALFCESNPGPVKYAASLLGLAGETCRLPLAPLAEDSRMRVREALTGAGLLN.

Residue Thr49 coordinates pyruvate. Tyr137 acts as the Proton donor/acceptor in catalysis. The active-site Schiff-base intermediate with substrate is Lys165. A pyruvate-binding site is contributed by Ile208.

This sequence belongs to the DapA family. Homotetramer; dimer of dimers.

The protein localises to the cytoplasm. It catalyses the reaction L-aspartate 4-semialdehyde + pyruvate = (2S,4S)-4-hydroxy-2,3,4,5-tetrahydrodipicolinate + H2O + H(+). The protein operates within amino-acid biosynthesis; L-lysine biosynthesis via DAP pathway; (S)-tetrahydrodipicolinate from L-aspartate: step 3/4. Its function is as follows. Catalyzes the condensation of (S)-aspartate-beta-semialdehyde [(S)-ASA] and pyruvate to 4-hydroxy-tetrahydrodipicolinate (HTPA). This Gluconacetobacter diazotrophicus (strain ATCC 49037 / DSM 5601 / CCUG 37298 / CIP 103539 / LMG 7603 / PAl5) protein is 4-hydroxy-tetrahydrodipicolinate synthase.